A 430-amino-acid polypeptide reads, in one-letter code: Gamma-glutamyl phosphate reductase (430 aa).

The protein belongs to the gamma-glutamyl phosphate reductase family.

It is found in the cytoplasm. The catalysed reaction is L-glutamate 5-semialdehyde + phosphate + NADP(+) = L-glutamyl 5-phosphate + NADPH + H(+). It functions in the pathway amino-acid biosynthesis; L-proline biosynthesis; L-glutamate 5-semialdehyde from L-glutamate: step 2/2. Catalyzes the NADPH-dependent reduction of L-glutamate 5-phosphate into L-glutamate 5-semialdehyde and phosphate. The product spontaneously undergoes cyclization to form 1-pyrroline-5-carboxylate. The polypeptide is Gamma-glutamyl phosphate reductase (Corynebacterium diphtheriae (strain ATCC 700971 / NCTC 13129 / Biotype gravis)).